Consider the following 307-residue polypeptide: Ribosomal RNA small subunit methyltransferase H (307 aa).

Residues 32–34, Asp-52, Phe-78, Asp-99, and Gln-106 contribute to the S-adenosyl-L-methionine site; that span reads GGH.

This sequence belongs to the methyltransferase superfamily. RsmH family.

Its subcellular location is the cytoplasm. It catalyses the reaction cytidine(1402) in 16S rRNA + S-adenosyl-L-methionine = N(4)-methylcytidine(1402) in 16S rRNA + S-adenosyl-L-homocysteine + H(+). In terms of biological role, specifically methylates the N4 position of cytidine in position 1402 (C1402) of 16S rRNA. This Acinetobacter baumannii (strain AB0057) protein is Ribosomal RNA small subunit methyltransferase H.